The primary structure comprises 70 residues: Large ribosomal subunit protein bL31 (70 aa).

The Zn(2+) site is built by Cys-16, Cys-18, Cys-37, and Cys-40.

Belongs to the bacterial ribosomal protein bL31 family. Type A subfamily. In terms of assembly, part of the 50S ribosomal subunit. Requires Zn(2+) as cofactor.

In terms of biological role, binds the 23S rRNA. This chain is Large ribosomal subunit protein bL31, found in Colwellia psychrerythraea (strain 34H / ATCC BAA-681) (Vibrio psychroerythus).